An 83-amino-acid chain; its full sequence is Small ribosomal subunit protein bS18 (83 aa).

A disordered region spans residues 1-23; the sequence is MKQRNNAKRVRLEQTRRPKKNPL.

This sequence belongs to the bacterial ribosomal protein bS18 family. As to quaternary structure, part of the 30S ribosomal subunit. Forms a tight heterodimer with protein bS6.

Functionally, binds as a heterodimer with protein bS6 to the central domain of the 16S rRNA, where it helps stabilize the platform of the 30S subunit. This Corynebacterium efficiens (strain DSM 44549 / YS-314 / AJ 12310 / JCM 11189 / NBRC 100395) protein is Small ribosomal subunit protein bS18.